Reading from the N-terminus, the 190-residue chain is Peptidyl-tRNA hydrolase (190 aa).

Residue F14 coordinates tRNA. Residue H19 is the Proton acceptor of the active site. The tRNA site is built by M64, N66, and N112.

It belongs to the PTH family. In terms of assembly, monomer.

Its subcellular location is the cytoplasm. The enzyme catalyses an N-acyl-L-alpha-aminoacyl-tRNA + H2O = an N-acyl-L-amino acid + a tRNA + H(+). Functionally, hydrolyzes ribosome-free peptidyl-tRNAs (with 1 or more amino acids incorporated), which drop off the ribosome during protein synthesis, or as a result of ribosome stalling. Its function is as follows. Catalyzes the release of premature peptidyl moieties from peptidyl-tRNA molecules trapped in stalled 50S ribosomal subunits, and thus maintains levels of free tRNAs and 50S ribosomes. This chain is Peptidyl-tRNA hydrolase, found in Staphylococcus haemolyticus (strain JCSC1435).